The primary structure comprises 643 residues: Threonine--tRNA ligase (643 aa).

The region spanning 1-61 (MIKITLKDGS…NEDSSLEICT (61 aa)) is the TGS domain. Positions 240 to 540 (DHNKLGRELG…LIEKYAGALP (301 aa)) are catalytic. Residues Cys335, His386, and His517 each contribute to the Zn(2+) site.

This sequence belongs to the class-II aminoacyl-tRNA synthetase family. As to quaternary structure, homodimer. Requires Zn(2+) as cofactor.

It is found in the cytoplasm. The catalysed reaction is tRNA(Thr) + L-threonine + ATP = L-threonyl-tRNA(Thr) + AMP + diphosphate + H(+). Catalyzes the attachment of threonine to tRNA(Thr) in a two-step reaction: L-threonine is first activated by ATP to form Thr-AMP and then transferred to the acceptor end of tRNA(Thr). Also edits incorrectly charged L-seryl-tRNA(Thr). This is Threonine--tRNA ligase from Clostridium perfringens (strain ATCC 13124 / DSM 756 / JCM 1290 / NCIMB 6125 / NCTC 8237 / Type A).